A 325-amino-acid chain; its full sequence is SPbeta prophage-derived uncharacterized protein YopR (325 aa).

The protein is SPbeta prophage-derived uncharacterized protein YopR (yopR) of Bacillus subtilis (strain 168).